The primary structure comprises 134 residues: Cytochrome b (134 aa).

3 helical membrane passes run 33 to 53 (FGSL…FLAM), 77 to 98 (WLIR…FLHV), and 113 to 133 (WNIG…GYVL). Positions 83 and 97 each coordinate heme b.

Belongs to the cytochrome b family. As to quaternary structure, the cytochrome bc1 complex contains 11 subunits: 3 respiratory subunits (MT-CYB, CYC1 and UQCRFS1), 2 core proteins (UQCRC1 and UQCRC2) and 6 low-molecular weight proteins (UQCRH/QCR6, UQCRB/QCR7, UQCRQ/QCR8, UQCR10/QCR9, UQCR11/QCR10 and a cleavage product of UQCRFS1). This cytochrome bc1 complex then forms a dimer. Heme b is required as a cofactor.

The protein localises to the mitochondrion inner membrane. In terms of biological role, component of the ubiquinol-cytochrome c reductase complex (complex III or cytochrome b-c1 complex) that is part of the mitochondrial respiratory chain. The b-c1 complex mediates electron transfer from ubiquinol to cytochrome c. Contributes to the generation of a proton gradient across the mitochondrial membrane that is then used for ATP synthesis. This Sorex shinto sadonis (Sado shrew) protein is Cytochrome b (MT-CYB).